The chain runs to 315 residues: Ribosomal RNA small subunit methyltransferase H (315 aa).

Residues 37-39 (GGH), aspartate 57, phenylalanine 83, aspartate 105, and glutamine 112 contribute to the S-adenosyl-L-methionine site. The disordered stretch occupies residues 296–315 (EVKANPRSRSAVMRVAEKVR).

Belongs to the methyltransferase superfamily. RsmH family.

It localises to the cytoplasm. The enzyme catalyses cytidine(1402) in 16S rRNA + S-adenosyl-L-methionine = N(4)-methylcytidine(1402) in 16S rRNA + S-adenosyl-L-homocysteine + H(+). Specifically methylates the N4 position of cytidine in position 1402 (C1402) of 16S rRNA. This chain is Ribosomal RNA small subunit methyltransferase H, found in Stutzerimonas stutzeri (strain A1501) (Pseudomonas stutzeri).